We begin with the raw amino-acid sequence, 209 residues long: Ribosomal RNA large subunit methyltransferase E (209 aa).

S-adenosyl-L-methionine contacts are provided by glycine 63, tryptophan 65, aspartate 83, aspartate 99, and aspartate 124. Lysine 164 (proton acceptor) is an active-site residue.

It belongs to the class I-like SAM-binding methyltransferase superfamily. RNA methyltransferase RlmE family.

It localises to the cytoplasm. The enzyme catalyses uridine(2552) in 23S rRNA + S-adenosyl-L-methionine = 2'-O-methyluridine(2552) in 23S rRNA + S-adenosyl-L-homocysteine + H(+). Specifically methylates the uridine in position 2552 of 23S rRNA at the 2'-O position of the ribose in the fully assembled 50S ribosomal subunit. The chain is Ribosomal RNA large subunit methyltransferase E from Yersinia pseudotuberculosis serotype O:1b (strain IP 31758).